We begin with the raw amino-acid sequence, 532 residues long: Muscarinic acetylcholine receptor M5 (532 aa).

Residues 1 to 29 are Extracellular-facing; that stretch reads MEGDSYHNATTVNGTPVYHQPLERHRLWE. N8 is a glycosylation site (N-linked (GlcNAc...) asparagine). A helical membrane pass occupies residues 30–53; the sequence is VISIAAVTAVVSLITIVGNVLVMI. Residues 54–66 are Cytoplasmic-facing; the sequence is SFKVNSQLKTVNN. A helical transmembrane segment spans residues 67–87; that stretch reads YYLLSLACADLIIGIFSMNLY. Topologically, residues 88–104 are extracellular; it reads TTYILMGRWALGSLACD. C103 and C183 are oxidised to a cystine. The chain crosses the membrane as a helical span at residues 105–126; it reads LWLALDYVASNASVMNLLVISF. Residues 127-146 are Cytoplasmic-facing; that stretch reads DRYFSITRPLTYRAKRTPKR. Residues 147–169 traverse the membrane as a helical segment; the sequence is AGVMIGLAWLISFILWAPAILCW. Topologically, residues 170–191 are extracellular; sequence QYLVGKRTVPLDECQIQFLSEP. Residues 192-214 traverse the membrane as a helical segment; that stretch reads TITFGTAIAAFYIPVSVMTILYC. The Cytoplasmic segment spans residues 215-443; it reads RIYRETEKRT…LVKERKAAQT (229 aa). The disordered stretch occupies residues 262–365; the sequence is AQRERNQTSW…SDTPNYFLSP (104 aa). Residues 269–281 show a composition bias toward low complexity; sequence TSWSSSRRSASTS. A compositionally biased stretch (polar residues) spans 282–308; sequence GKPSQATDPSTNQAKAEQLTTCSSYPS. The chain crosses the membrane as a helical span at residues 444 to 464; it reads LSAILLAFIITWTPYNIMVLV. At 465–478 the chain is on the extracellular side; that stretch reads STFCDKCVPVTLWH. Residues 479–498 form a helical membrane-spanning segment; that stretch reads LGYWLCYVNSTVNPICYALC. The Cytoplasmic segment spans residues 499 to 532; sequence NRTFRKTFKMLLLCRWKKKKVEEKLYWQGNSKLP. 2 positions are modified to phosphothreonine: T501 and T505.

The protein belongs to the G-protein coupled receptor 1 family. Muscarinic acetylcholine receptor subfamily. CHRM5 sub-subfamily.

The protein localises to the cell membrane. It localises to the postsynaptic cell membrane. Functionally, the muscarinic acetylcholine receptor mediates various cellular responses, including inhibition of adenylate cyclase, breakdown of phosphoinositides and modulation of potassium channels through the action of G proteins. Primary transducing effect is Pi turnover. This is Muscarinic acetylcholine receptor M5 (CHRM5) from Macaca mulatta (Rhesus macaque).